A 450-amino-acid chain; its full sequence is UDP-N-acetylmuramoylalanine--D-glutamate ligase (450 aa).

119-125 (GSNGKTT) is a binding site for ATP.

The protein belongs to the MurCDEF family.

The protein resides in the cytoplasm. The enzyme catalyses UDP-N-acetyl-alpha-D-muramoyl-L-alanine + D-glutamate + ATP = UDP-N-acetyl-alpha-D-muramoyl-L-alanyl-D-glutamate + ADP + phosphate + H(+). It participates in cell wall biogenesis; peptidoglycan biosynthesis. In terms of biological role, cell wall formation. Catalyzes the addition of glutamate to the nucleotide precursor UDP-N-acetylmuramoyl-L-alanine (UMA). This chain is UDP-N-acetylmuramoylalanine--D-glutamate ligase, found in Streptococcus pneumoniae serotype 4 (strain ATCC BAA-334 / TIGR4).